We begin with the raw amino-acid sequence, 289 residues long: E3 ubiquitin-protein ligase MARCHF1 (289 aa).

Residues 1–66 are responsible for low stability; that stretch reads MLGWCEAIAR…SPTTGTAPRS (66 aa). The tract at residues 13–69 is disordered; sequence HRIPNNTRTPEISGDLADASQTSTLNEKSPGRSASRSSNISKASSPTTGTAPRSQSR. The segment covering 43–58 has biased composition (low complexity); that stretch reads GRSASRSSNISKASSP. Over residues 59 to 69 the composition is skewed to polar residues; that stretch reads TTGTAPRSQSR. The RING-CH-type zinc finger occupies 72–133; it reads VCPSTQDICR…ELCKYDFIME (62 aa). Cysteine 80, cysteine 83, cysteine 97, cysteine 99, histidine 107, cysteine 110, cysteine 123, and cysteine 126 together coordinate Zn(2+). The next 2 membrane-spanning stretches (helical) occupy residues 155 to 175 and 197 to 217; these read IFCSVTFHVIAITCVVWSLYV and FWTKLVVVAIGFTGGLVFMYV. The responsible for down-regulation of CD86 and MHC class II cell surface expression stretch occupies residues 222–279; the sequence is YVQLWRRLKAYNRVIFVQNCPDTAKKLEKNFSCNVNTDIKDAVVVPVPQTGANSLPSA.

Interacts with CD83; this interaction antagonizes MARCHF1-mediated MHC II and CD86 down-regulation. Post-translationally, ubiquitinated via ubiquitin-conjugating enzyme E2 D1/UBE2D1 independently of lysines, leading to proteolytic degradation. In terms of processing, has a short half-life. Instability/short half-life permits rapid changes that allow efficient induction of antigen presentation once antigen presenting cells, APCs, receive maturation signals. Small changes in protein levels significantly alter the cell surface display of MHC class II proteins. In terms of tissue distribution, expressed in antigen presenting cells, APCs, located in lymph nodes and spleen. Also expressed in lung. Expression is high in follicular B-cells, moderate in dendritic cells and low in splenic T-cells.

Its subcellular location is the golgi apparatus. It is found in the trans-Golgi network membrane. The protein localises to the lysosome membrane. The protein resides in the cytoplasmic vesicle membrane. It localises to the late endosome membrane. Its subcellular location is the early endosome membrane. It is found in the cell membrane. The enzyme catalyses S-ubiquitinyl-[E2 ubiquitin-conjugating enzyme]-L-cysteine + [acceptor protein]-L-lysine = [E2 ubiquitin-conjugating enzyme]-L-cysteine + N(6)-ubiquitinyl-[acceptor protein]-L-lysine.. Its pathway is protein modification; protein ubiquitination. In terms of biological role, E3 ubiquitin-protein ligase that mediates ubiquitination of TFRC, CD86, FAS and MHC class II proteins, such as HLA-DR alpha and beta, and promotes their subsequent endocytosis and sorting to lysosomes via multivesicular bodies. By constitutively ubiquitinating MHC class II proteins in immature dendritic cells, down-regulates their cell surface localization thus sequestering them in the intracellular endosomal system. Also regulates insulin sensitivity by controlling surface expression of the insulin receptor subunit beta/INSR by direct ubiquitination and degradation. (Microbial infection) Plays a role in iron metabolism by regulating the levels of the transferrin receptor TFRC during human cytomegalovirus infection, subsequently contributing to a proviral effect. This Homo sapiens (Human) protein is E3 ubiquitin-protein ligase MARCHF1.